Consider the following 101-residue polypeptide: MPEITTKPRTKVKPQTERPKLYKVILINDDFTPREFVVTVLKGEFKLSEDQAHRIMITAHRRGVCVVAVFTKDVAETKATRATDAGKAKGYPLLFTTEPEE.

It belongs to the ClpS family. Binds to the N-terminal domain of the chaperone ClpA.

In terms of biological role, involved in the modulation of the specificity of the ClpAP-mediated ATP-dependent protein degradation. This is ATP-dependent Clp protease adapter protein ClpS 2 from Mesorhizobium japonicum (strain LMG 29417 / CECT 9101 / MAFF 303099) (Mesorhizobium loti (strain MAFF 303099)).